Reading from the N-terminus, the 132-residue chain is Small ribosomal subunit protein uS8c (132 aa).

Belongs to the universal ribosomal protein uS8 family. As to quaternary structure, part of the 30S ribosomal subunit.

It localises to the plastid. The protein localises to the chloroplast. One of the primary rRNA binding proteins, it binds directly to 16S rRNA central domain where it helps coordinate assembly of the platform of the 30S subunit. The sequence is that of Small ribosomal subunit protein uS8c (rps8) from Liriodendron tulipifera (Tuliptree).